The primary structure comprises 337 residues: Glyceraldehyde-3-phosphate dehydrogenase (337 aa).

Residues arginine 17 to isoleucine 18, aspartate 39, lysine 83, and serine 125 each bind NAD(+). D-glyceraldehyde 3-phosphate is bound by residues serine 156 to threonine 158, threonine 187, arginine 202, threonine 215 to glycine 216, and arginine 238. The active-site Nucleophile is cysteine 157. Asparagine 319 lines the NAD(+) pocket.

The protein belongs to the glyceraldehyde-3-phosphate dehydrogenase family. As to quaternary structure, homotetramer.

The protein resides in the cytoplasm. It carries out the reaction D-glyceraldehyde 3-phosphate + phosphate + NAD(+) = (2R)-3-phospho-glyceroyl phosphate + NADH + H(+). Its pathway is carbohydrate degradation; glycolysis; pyruvate from D-glyceraldehyde 3-phosphate: step 1/5. Functionally, catalyzes the oxidative phosphorylation of glyceraldehyde 3-phosphate (G3P) to 1,3-bisphosphoglycerate (BPG) using the cofactor NAD. The first reaction step involves the formation of a hemiacetal intermediate between G3P and a cysteine residue, and this hemiacetal intermediate is then oxidized to a thioester, with concomitant reduction of NAD to NADH. The reduced NADH is then exchanged with the second NAD, and the thioester is attacked by a nucleophilic inorganic phosphate to produce BPG. This chain is Glyceraldehyde-3-phosphate dehydrogenase (gapA), found in Mycoplasma genitalium (strain ATCC 33530 / DSM 19775 / NCTC 10195 / G37) (Mycoplasmoides genitalium).